Reading from the N-terminus, the 829-residue chain is Periplasmic nitrate reductase (829 aa).

Residues 1–30 constitute a signal peptide (tat-type signal); that stretch reads MKMTRRAFVKANAAASAAAVAGITLPASAA. One can recognise a 4Fe-4S Mo/W bis-MGD-type domain in the interval 41–97; the sequence is ITWDKAPCRFCGTGCSVLVGTQNGKVVATQGDPEAPVNKGLNCIKGYFLSKIMYGQD. The [4Fe-4S] cluster site is built by Cys48, Cys51, Cys55, and Cys83. Residues Lys85, Gln152, Asn177, Cys181, 214 to 221, 245 to 249, 264 to 266, Met374, Gln378, Asn484, 510 to 511, Lys533, Asp560, and 718 to 727 contribute to the Mo-bis(molybdopterin guanine dinucleotide) site; these read WGSNMAEM, STYYH, QSD, SD, and TGRVLEHWHT. Residue Phe794 participates in substrate binding. The Mo-bis(molybdopterin guanine dinucleotide) site is built by Asn802 and Lys819.

It belongs to the prokaryotic molybdopterin-containing oxidoreductase family. NasA/NapA/NarB subfamily. As to quaternary structure, component of the periplasmic nitrate reductase NapAB complex composed of NapA and NapB. Requires [4Fe-4S] cluster as cofactor. The cofactor is Mo-bis(molybdopterin guanine dinucleotide). Predicted to be exported by the Tat system. The position of the signal peptide cleavage has not been experimentally proven.

Its subcellular location is the periplasm. It carries out the reaction 2 Fe(II)-[cytochrome] + nitrate + 2 H(+) = 2 Fe(III)-[cytochrome] + nitrite + H2O. Catalytic subunit of the periplasmic nitrate reductase complex NapAB. Receives electrons from NapB and catalyzes the reduction of nitrate to nitrite. This chain is Periplasmic nitrate reductase, found in Vibrio vulnificus (strain CMCP6).